The sequence spans 353 residues: Photosystem II protein D1 (353 aa).

Residue Thr-2 is modified to N-acetylthreonine. Position 2 is a phosphothreonine (Thr-2). 3 consecutive transmembrane segments (helical) span residues 29 to 46 (YIGW…TATS), 118 to 133 (HFLL…EWEL), and 142 to 156 (WIAV…AATA). A chlorophyll a-binding site is contributed by His-118. Residue Tyr-126 coordinates pheophytin a. Positions 170 and 189 each coordinate [CaMn4O5] cluster. The helical transmembrane segment at 197 to 218 (FHMLGVAGVFGGSLFSAMHGSL) threads the bilayer. Position 198 (His-198) interacts with chlorophyll a. A quinone contacts are provided by residues His-215 and 264–265 (SF). His-215 lines the Fe cation pocket. His-272 serves as a coordination point for Fe cation. A helical membrane pass occupies residues 274 to 288 (FLAAWPVVGIWFTAL). [CaMn4O5] cluster-binding residues include His-332, Glu-333, Asp-342, and Ala-344. A propeptide spanning residues 345–353 (AVEVPSING) is cleaved from the precursor.

Belongs to the reaction center PufL/M/PsbA/D family. PSII is composed of 1 copy each of membrane proteins PsbA, PsbB, PsbC, PsbD, PsbE, PsbF, PsbH, PsbI, PsbJ, PsbK, PsbL, PsbM, PsbT, PsbX, PsbY, PsbZ, Psb30/Ycf12, at least 3 peripheral proteins of the oxygen-evolving complex and a large number of cofactors. It forms dimeric complexes. Requires The D1/D2 heterodimer binds P680, chlorophylls that are the primary electron donor of PSII, and subsequent electron acceptors. It shares a non-heme iron and each subunit binds pheophytin, quinone, additional chlorophylls, carotenoids and lipids. D1 provides most of the ligands for the Mn4-Ca-O5 cluster of the oxygen-evolving complex (OEC). There is also a Cl(-1) ion associated with D1 and D2, which is required for oxygen evolution. The PSII complex binds additional chlorophylls, carotenoids and specific lipids. as cofactor. Post-translationally, tyr-161 forms a radical intermediate that is referred to as redox-active TyrZ, YZ or Y-Z. C-terminally processed by CTPA; processing is essential to allow assembly of the oxygen-evolving complex and thus photosynthetic growth.

Its subcellular location is the plastid. It localises to the chloroplast thylakoid membrane. It catalyses the reaction 2 a plastoquinone + 4 hnu + 2 H2O = 2 a plastoquinol + O2. Functionally, photosystem II (PSII) is a light-driven water:plastoquinone oxidoreductase that uses light energy to abstract electrons from H(2)O, generating O(2) and a proton gradient subsequently used for ATP formation. It consists of a core antenna complex that captures photons, and an electron transfer chain that converts photonic excitation into a charge separation. The D1/D2 (PsbA/PsbD) reaction center heterodimer binds P680, the primary electron donor of PSII as well as several subsequent electron acceptors. The protein is Photosystem II protein D1 of Triticum aestivum (Wheat).